The primary structure comprises 493 residues: Flagellin (493 aa).

It belongs to the bacterial flagellin family.

The protein localises to the secreted. Its subcellular location is the bacterial flagellum. In terms of biological role, flagellin is the subunit protein which polymerizes to form the filaments of bacterial flagella. The polypeptide is Flagellin (fliC) (Salmonella rubislaw).